Consider the following 657-residue polypeptide: Interferon-induced GTP-binding protein Mx1 (657 aa).

Residue methionine 1 is modified to N-acetylmethionine. One can recognise a Dynamin-type G domain in the interval 63 to 336 (DLALPAIAVI…LITHICKTLP (274 aa)). Residues 73-80 (GDQSSGKS) are G1 motif. GTP is bound at residue 73-80 (GDQSSGKS). A G2 motif region spans residues 98–100 (VTR). Residues 174-177 (DLPG) form a G3 motif region. GTP-binding positions include 174-178 (DLPGI) and 243-246 (TKPD). The tract at residues 243–246 (TKPD) is G4 motif. The tract at residues 275–278 (KCRG) is G5 motif. The bundle signaling element (BSE) stretch occupies residues 337–362 (LLENQIKENHEKITEELQKYGSDVPE). The segment at 362 to 529 (EDEHEKMFFL…HFQMEQIVYC (168 aa)) is middle domain. Residues 363–627 (DEHEKMFFLI…KDTYSWLLKE (265 aa)) are stalk. Residues 540–551 (RVREKDSDEEKK) show a composition bias toward basic and acidic residues. The interval 540–559 (RVREKDSDEEKKKKTSSMSH) is disordered. The tract at residues 550–553 (KKKK) is critical for lipid-binding. The 89-residue stretch at 569-657 (LSEILEHLLA…ARRRLAKFPG (89 aa)) folds into the GED domain.

This sequence belongs to the TRAFAC class dynamin-like GTPase superfamily. Dynamin/Fzo/YdjA family. Homooligomer. Oligomerizes into multimeric filamentous or ring-like structures by virtue of its stalk domain. Oligomerization is critical for GTPase activity, protein stability, and recognition of viral target structures. Interacts with TRPC1, TRPC3, TRPC4, TRPC5, TRPC6 and TRPC7. Interacts with HSPA5. Interacts with TUBB/TUBB5. Interacts with DDX39A and DDX39B. ISGylated.

The protein resides in the cytoplasm. Its subcellular location is the endoplasmic reticulum membrane. The protein localises to the perinuclear region. Its function is as follows. Interferon-induced dynamin-like GTPase with antiviral activity. The protein is Interferon-induced GTP-binding protein Mx1 (MX1) of Canis lupus familiaris (Dog).